The primary structure comprises 504 residues: MLSQRLIGRTAVKSAFRPSGLPTVVNASRWRRGYATEADRDLVIIGGGVAGYVAAIKAGQEGMKVTCIEKRGTLGGTCLNVGCIPSKSLLNNSHLYHTILHDTKHRGIEVGDVKLNLGQLMKAKEQSVSGLTKGIEFLFKKNGVEYLKGTGSFEDPHTVKVELNDGGETRVTGKNILIATGSEVTPFPGLEIDEKTIISSTGALSLDHVPKKFLVIGGGIIGLEMASVWSRLGSEVTVVEYLDQIGGPGMDTEISKNIQKILKKQGINFKTGTKVLNGEKTGDGVKINVEAAKGGKPETLEADVVLVAIGRRPYTKGLGLEKIGIELDERGRVIIDQEYRTKIPHIRCVGDATFGPMLAHKAEEEAVAVVEYIKKGYGHVNYGCIPAVMYTFPEVAWVGQSEQDLKKAGIPYRVGTFPFSANSRAKTNLDTEGFVKMLADPETDRLLGIHIIGPNAGEMIAEGTLALEYGASSEDIARTCHAHPTLAEAFKEAAMATYSKAIHF.

The N-terminal 34 residues, 1 to 34 (MLSQRLIGRTAVKSAFRPSGLPTVVNASRWRRGY), are a transit peptide targeting the mitochondrion. FAD-binding positions include 69–78 (EKRGTLGGTC), Lys87, Gly151, and 180–182 (TGS). A disulfide bridge links Cys78 with Cys83. Residues 217 to 224 (GGGIIGLE), Glu240, Val275, and Gly310 contribute to the NAD(+) site. FAD is bound by residues Asp351 and 357–360 (MLAH). The active-site Proton acceptor is the His483.

This sequence belongs to the class-I pyridine nucleotide-disulfide oxidoreductase family. As to quaternary structure, eukaryotic pyruvate dehydrogenase (PDH) complexes are organized as a core consisting of the oligomeric dihydrolipoamide acetyl-transferase (E2), around which are arranged multiple copies of pyruvate dehydrogenase (E1), dihydrolipoamide dehydrogenase (E3) and protein X (E3BP) bound by non-covalent bonds. The Chaetomium thermophilum PDH complex contains 60 E2 units, 12 E3BP units, about 20 E1 units, and 12 or more E3 units. The units are organized in 1 E2 60-mer, 4 E3BP trimers, about 20 E1 tetramers, and a maximum of 12 E3 dimers. The E3BP trimers are bound inside the icosahedral core with tetrahedral symmetry. Requires FAD as cofactor.

It is found in the mitochondrion. The catalysed reaction is N(6)-[(R)-dihydrolipoyl]-L-lysyl-[protein] + NAD(+) = N(6)-[(R)-lipoyl]-L-lysyl-[protein] + NADH + H(+). Lipoamide dehydrogenase is a component of the alpha-ketoacid dehydrogenase complexes. This includes the pyruvate dehydrogenase complex, which catalyzes the overall conversion of pyruvate to acetyl-CoA and CO(2). Also acts as a component of the glycine cleavage system (glycine decarboxylase complex), which catalyzes the degradation of glycine. The 10-megadalton pyruvate dehydrogenase complex contains multiple copies of three enzymatic components: pyruvate dehydrogenase (E1), dihydrolipoamide acetyltransferase (E2) and lipoamide dehydrogenase (E3) and catalyzes the overall oxidative decarboxylation of pyruvate to form acetyl-CoA and CO(2). Within the complex, pyruvate and thiamine pyrophosphate (TPP or vitamin B1) are bound by pyruvate dehydrogenase E1 subunits alpha and beta and pyruvate is decarboxylated leading to the 2-carbon hydrohyethyl bound to TPP. The E2 component contains covalently-bound lipoyl cofactors and transfers the hydroxyethyl group from TPP to an oxidized form of covalently bound lipoamide, and the resulting acetyl group is then transferred to free coenzyme A to form acetyl-CoA and reduced dihydrolipoamide-E2. Finally, the flavoprotein dihydrolipoamide dehydrogenase (E3) re-oxidizes the lipoyl group of dihydrolipoamide-E2 to form lipoamide-E2 and NADH. A fourth subunit, E3BP, is responsible for tethering E3 in proximity to the core, forming the entire metabolon. This Chaetomium thermophilum (strain DSM 1495 / CBS 144.50 / IMI 039719) (Thermochaetoides thermophila) protein is Dihydrolipoamide dehydrogenase.